A 151-amino-acid chain; its full sequence is 3-dehydroquinate dehydratase 1 (151 aa).

Tyrosine 24 serves as the catalytic Proton acceptor. Substrate-binding residues include asparagine 75, histidine 81, and aspartate 88. The active-site Proton donor is the histidine 101. Substrate contacts are provided by residues 102–103 (IS) and arginine 112.

Belongs to the type-II 3-dehydroquinase family. As to quaternary structure, homododecamer.

The catalysed reaction is 3-dehydroquinate = 3-dehydroshikimate + H2O. The protein operates within metabolic intermediate biosynthesis; chorismate biosynthesis; chorismate from D-erythrose 4-phosphate and phosphoenolpyruvate: step 3/7. Functionally, catalyzes a trans-dehydration via an enolate intermediate. The sequence is that of 3-dehydroquinate dehydratase 1 (aroQ1) from Corynebacterium efficiens (strain DSM 44549 / YS-314 / AJ 12310 / JCM 11189 / NBRC 100395).